The primary structure comprises 348 residues: Beta-hexosaminidase (348 aa).

Substrate contacts are provided by residues Asp64, Arg72, Arg138, and 168-169; that span reads KH. Catalysis depends on His181, which acts as the Proton donor/acceptor. The active-site Nucleophile is Asp252.

Belongs to the glycosyl hydrolase 3 family. NagZ subfamily.

It localises to the cytoplasm. The catalysed reaction is Hydrolysis of terminal non-reducing N-acetyl-D-hexosamine residues in N-acetyl-beta-D-hexosaminides.. Its pathway is cell wall biogenesis; peptidoglycan recycling. Plays a role in peptidoglycan recycling by cleaving the terminal beta-1,4-linked N-acetylglucosamine (GlcNAc) from peptide-linked peptidoglycan fragments, giving rise to free GlcNAc, anhydro-N-acetylmuramic acid and anhydro-N-acetylmuramic acid-linked peptides. The chain is Beta-hexosaminidase from Nitrosomonas eutropha (strain DSM 101675 / C91 / Nm57).